The chain runs to 505 residues: RNA-splicing ligase RtcB homolog (505 aa).

Asp-119, Cys-122, His-227, and His-259 together coordinate Mn(2+). 226–230 serves as a coordination point for GMP; the sequence is NHYAE. At Ser-300 the chain carries Phosphoserine. His-353 serves as a coordination point for Mn(2+). GMP contacts are provided by residues 353 to 354, 402 to 405, Ser-409, and 428 to 431; these read HN, GGTM, and HGAG. His-428 serves as the catalytic GMP-histidine intermediate. Lys-496 is covalently cross-linked (Glycyl lysine isopeptide (Lys-Gly) (interchain with G-Cter in SUMO2)). Residue Lys-504 participates in GMP binding.

Belongs to the RtcB family. Catalytic component of the tRNA-splicing ligase complex. Requires Mn(2+) as cofactor.

Its subcellular location is the nucleus. The protein localises to the cytoplasm. The enzyme catalyses a 3'-end 3'-phospho-ribonucleotide-RNA + a 5'-end dephospho-ribonucleoside-RNA + GTP = a ribonucleotidyl-ribonucleotide-RNA + GMP + diphosphate. It catalyses the reaction a 3'-end 2',3'-cyclophospho-ribonucleotide-RNA + a 5'-end dephospho-ribonucleoside-RNA + GTP + H2O = a ribonucleotidyl-ribonucleotide-RNA + GMP + diphosphate + H(+). In terms of biological role, catalytic subunit of the tRNA-splicing ligase complex that acts by directly joining spliced tRNA halves to mature-sized tRNAs by incorporating the precursor-derived splice junction phosphate into the mature tRNA as a canonical 3',5'-phosphodiester. May act as an RNA ligase with broad substrate specificity, and may function toward other RNAs. In Sus scrofa (Pig), this protein is RNA-splicing ligase RtcB homolog.